We begin with the raw amino-acid sequence, 132 residues long: Small ribosomal subunit protein eS24 (132 aa).

Over residues 90–100 the composition is skewed to basic and acidic residues; that stretch reads RLARHGLFEKK. The interval 90–132 is disordered; it reads RLARHGLFEKKKTSRKQRKERKNRMKKVRGTKKASVGASKKKD. Basic residues predominate over residues 101–121; it reads KTSRKQRKERKNRMKKVRGTK.

It belongs to the eukaryotic ribosomal protein eS24 family. Component of the small ribosomal subunit.

Its subcellular location is the cytoplasm. In terms of biological role, component of the small ribosomal subunit. The ribosome is a large ribonucleoprotein complex responsible for the synthesis of proteins in the cell. Required for processing of pre-rRNA and maturation of 40S ribosomal subunits. The chain is Small ribosomal subunit protein eS24 (rps24) from Takifugu rubripes (Japanese pufferfish).